The chain runs to 338 residues: Large ribosomal subunit protein uL3 (338 aa).

Residues 1–37 (MPQPSRPRKGSMGFSPRKRAESEVPRIRSWASNDGAP) are disordered.

It belongs to the universal ribosomal protein uL3 family. In terms of assembly, part of the 50S ribosomal subunit. Forms a cluster with proteins L14 and L24e.

One of the primary rRNA binding proteins, it binds directly near the 3'-end of the 23S rRNA, where it nucleates assembly of the 50S subunit. This is Large ribosomal subunit protein uL3 from Haloquadratum walsbyi (strain DSM 16790 / HBSQ001).